Consider the following 284-residue polypeptide: Protein phosphatase 1 regulatory subunit 3B (284 aa).

The PP1-binding motif motif lies at 61 to 64; the sequence is RVSF. Residues 124–232 enclose the CBM21 domain; the sequence is RNRLQTNHVC…SNKGKNYRIT (109 aa). A Phosphoserine modification is found at Ser-260.

As to quaternary structure, interacts with glycogen, PPP1CC catalytic subunit of PP1 and PYGL. Associates with glycogen particles. Forms complexes with debranching enzyme, glycogen phosphorylase, glycogen synthase and phosphorylase kinase which is necessary for its regulation of PP1 activity. In terms of tissue distribution, highly expressed in liver (at protein level). Expressed predominantly in liver. Expressed moderately in heart. Expressed weakly in prostate, stomach, thyroid, lung, kidney, spleen and skeletal muscle.

Acts as a glycogen-targeting subunit for phosphatase PP1. Facilitates interaction of the PP1 with enzymes of the glycogen metabolism and regulates its activity. Suppresses the rate at which PP1 dephosphorylates (inactivates) glycogen phosphorylase and enhances the rate at which it activates glycogen synthase and therefore limits glycogen breakdown. Its activity is inhibited by PYGL, resulting in inhibition of the glycogen synthase and glycogen phosphorylase phosphatase activities of PP1. Dramatically increases basal and insulin-stimulated glycogen synthesis upon overexpression in hepatocytes. The polypeptide is Protein phosphatase 1 regulatory subunit 3B (Ppp1r3b) (Mus musculus (Mouse)).